A 466-amino-acid polypeptide reads, in one-letter code: Ribulose bisphosphate carboxylase large chain (466 aa).

K5 is modified (N6,N6,N6-trimethyllysine). Substrate contacts are provided by N114 and T164. Residue K166 is the Proton acceptor of the active site. Substrate is bound at residue K168. The Mg(2+) site is built by K192, D194, and E195. An N6-carboxylysine modification is found at K192. H285 acts as the Proton acceptor in catalysis. 3 residues coordinate substrate: R286, H318, and S370.

The protein belongs to the RuBisCO large chain family. Type I subfamily. In terms of assembly, heterohexadecamer of 8 large chains and 8 small chains; disulfide-linked. The disulfide link is formed within the large subunit homodimers. Mg(2+) is required as a cofactor. In terms of processing, the disulfide bond which can form in the large chain dimeric partners within the hexadecamer appears to be associated with oxidative stress and protein turnover.

It is found in the plastid. The protein resides in the chloroplast. The catalysed reaction is 2 (2R)-3-phosphoglycerate + 2 H(+) = D-ribulose 1,5-bisphosphate + CO2 + H2O. It catalyses the reaction D-ribulose 1,5-bisphosphate + O2 = 2-phosphoglycolate + (2R)-3-phosphoglycerate + 2 H(+). RuBisCO catalyzes two reactions: the carboxylation of D-ribulose 1,5-bisphosphate, the primary event in carbon dioxide fixation, as well as the oxidative fragmentation of the pentose substrate in the photorespiration process. Both reactions occur simultaneously and in competition at the same active site. This chain is Ribulose bisphosphate carboxylase large chain, found in Bixa orellana (Lipstick tree).